We begin with the raw amino-acid sequence, 521 residues long: Acidic amino acid decarboxylase GADL1 (521 aa).

The residue at position 333 (K333) is an N6-(pyridoxal phosphate)lysine.

This sequence belongs to the group II decarboxylase family. As to quaternary structure, homodimer. Pyridoxal 5'-phosphate is required as a cofactor. Expressed very weakly in neurons and not detected in astrocytes, brain or liver.

It catalyses the reaction L-aspartate + H(+) = beta-alanine + CO2. It carries out the reaction 3-sulfino-L-alanine + H(+) = hypotaurine + CO2. The enzyme catalyses L-cysteate + H(+) = taurine + CO2. Functionally, may catalyze the decarboxylation of L-aspartate, 3-sulfino-L-alanine (cysteine sulfinic acid), and L-cysteate to beta-alanine, hypotaurine and taurine, respectively. Does not exhibit any decarboxylation activity toward glutamate. The sequence is that of Acidic amino acid decarboxylase GADL1 (GADL1) from Homo sapiens (Human).